Reading from the N-terminus, the 109-residue chain is Putative gametogenetin-binding protein 1 (109 aa).

Residues 24–109 (KAFRSTDTVG…KGEMGNWPPE (86 aa)) form an interaction with GGN region.

As to quaternary structure, interacts with CCDC159. Interacts with GGN.

It is found in the cytoplasm. The protein resides in the membrane. Its subcellular location is the golgi apparatus. Its function is as follows. May be involved in spermatogenesis. The chain is Putative gametogenetin-binding protein 1 (GGNBP1) from Homo sapiens (Human).